A 162-amino-acid chain; its full sequence is MGCCYSGETDTGKGDQGEREHLLPQSQSLPNKAPNESEQNSTNNPSARTDEQAMLSRILAKTAQNIIDVSAVESQGMEQHECMDRARQYSTRLAKLSSNLMDWKKVPPLPSLTSQPHQILASDPVPFADIQQVSKIAAYAFSALSQIRVDAKEDLVVQFGIP.

The interval 1–54 is disordered; the sequence is MGCCYSGETDTGKGDQGEREHLLPQSQSLPNKAPNESEQNSTNNPSARTDEQAM. Gly-2 carries N-myristoyl glycine lipidation. 2 S-palmitoyl cysteine lipidation sites follow: Cys-3 and Cys-4. Residues 10 to 22 show a composition bias toward basic and acidic residues; that stretch reads DTGKGDQGEREHL. The span at 24–47 shows a compositional bias: polar residues; that stretch reads PQSQSLPNKAPNESEQNSTNNPSA.

This sequence belongs to the LAMTOR1 family. As to quaternary structure, part of the Ragulator complex composed of lamtor1, lamtor2, lamtor3, lamtor4 and lamtor5. The Ragulator complex interacts with slc38a9; the probable amino acid sensor. Component of the lysosomal folliculin complex (LFC). In terms of processing, N-terminal myristoylation and palmitoylation mediates its recruitment to lysosome membranes, thereby promoting localization of the Ragulator complex to lysosomes. N-myristoylation by NMT1 is required for palmitoylation at Cys-3 and Cys-4.

It is found in the lysosome membrane. The protein resides in the late endosome membrane. Functionally, key component of the Ragulator complex, a multiprotein complex involved in amino acid sensing and activation of mTORC1, a signaling complex promoting cell growth in response to growth factors, energy levels, and amino acids. Activated by amino acids through a mechanism involving the lysosomal V-ATPase, the Ragulator plays a dual role for the small GTPases Rag (RagA/RRAGA, RagB/RRAGB, RagC/RRAGC and/or RagD/RRAGD): it (1) acts as a guanine nucleotide exchange factor (GEF), activating the small GTPases Rag and (2) mediates recruitment of Rag GTPases to the lysosome membrane. Activated Ragulator and Rag GTPases function as a scaffold recruiting mTORC1 to lysosomes where it is in turn activated. LAMTOR1 is directly responsible for anchoring the Ragulator complex to the lysosomal membrane. LAMTOR1 wraps around the other subunits of the Ragulator complex to hold them in place and interacts with the Rag GTPases, thereby playing a key role in the recruitment of the mTORC1 complex to lysosomes. This is Ragulator complex protein LAMTOR1 (lamtor1) from Xenopus tropicalis (Western clawed frog).